The sequence spans 131 residues: Predicted GPI-anchored protein 26 (131 aa).

Residues 1–18 (MHFSKIIAGSALSSVALA) form the signal peptide. N-linked (GlcNAc...) asparagine glycosylation is found at asparagine 22 and asparagine 104. Glycine 110 carries GPI-anchor amidated glycine lipidation. Positions 111 to 131 (AGSKNVASALVGVVAIAAAMM) are cleaved as a propeptide — removed in mature form.

It localises to the cell membrane. GPI-anchored protein involved in proper cell wall integrity. Does not seem to be directly involved in the synthesis of the cell wall. Required for normal virulence in a mouse model of disseminated candidiasis. The chain is Predicted GPI-anchored protein 26 (PGA26) from Candida albicans (strain SC5314 / ATCC MYA-2876) (Yeast).